Reading from the N-terminus, the 370-residue chain is tRNA-specific 2-thiouridylase MnmA (370 aa).

Residues 11 to 18 (GMSGGVDS) and methionine 37 contribute to the ATP site. The interaction with target base in tRNA stretch occupies residues 97–99 (NPD). Cysteine 102 acts as the Nucleophile in catalysis. Cysteine 102 and cysteine 199 are disulfide-bonded. Glycine 126 is an ATP binding site. The interaction with tRNA stretch occupies residues 149–151 (KDQ). Residue cysteine 199 is the Cysteine persulfide intermediate of the active site. The interval 307 to 308 (RY) is interaction with tRNA.

This sequence belongs to the MnmA/TRMU family.

The protein localises to the cytoplasm. The catalysed reaction is S-sulfanyl-L-cysteinyl-[protein] + uridine(34) in tRNA + AH2 + ATP = 2-thiouridine(34) in tRNA + L-cysteinyl-[protein] + A + AMP + diphosphate + H(+). Its function is as follows. Catalyzes the 2-thiolation of uridine at the wobble position (U34) of tRNA, leading to the formation of s(2)U34. The chain is tRNA-specific 2-thiouridylase MnmA from Staphylococcus carnosus (strain TM300).